Here is a 647-residue protein sequence, read N- to C-terminus: A-type voltage-gated potassium channel KCND1 (647 aa).

At Met1 to Thr183 the chain is on the cytoplasmic side. The tract at residues Ala2–Leu20 is interaction with KCNIP1, KCNIP2, and other family members. The Zn(2+) site is built by His104, Cys131, and Cys132. Residues Ala144–Ala164 form a disordered region. Residues Ala184–Val205 traverse the membrane as a helical segment. Over Glu206–Ala230 the chain is Extracellular. Residues Phe231–Ala252 form a helical membrane-spanning segment. The Cytoplasmic segment spans residues Ala253–Val263. The chain crosses the membrane as a helical span at residues Met264 to Asn284. The Extracellular segment spans residues Glu285–Val287. The helical; Voltage-sensor transmembrane segment at Ser288–His308 threads the bilayer. The Cytoplasmic segment spans residues Ser309–Ala323. Positions Gln310–Ala323 are S4-S5 linker. Residues Ser324–Phe345 traverse the membrane as a helical segment. Residues Tyr346–Ile359 lie on the Extracellular side of the membrane. An intramembrane region (helical) is located at residues Pro360 to Thr371. The Selectivity filter motif lies at Thr372–Asp377. Residues Thr372–Val379 lie within the membrane without spanning it. Topologically, residues Pro380–Lys386 are extracellular. The helical transmembrane segment at Ile387–Tyr415 threads the bilayer. At His416–Leu647 the chain is on the cytoplasmic side. The segment at Phe474–Thr489 is required for dendritic targeting. Residues Gly510–Ser520 are compositionally biased toward low complexity. Residues Gly510–Ser531 form a disordered region. Polar residues predominate over residues Gln521–Ser530. Ser555 carries the post-translational modification Phosphoserine. Disordered regions lie at residues Gly564–Ser584 and Ile601–Thr634.

The protein belongs to the potassium channel family. D (Shal) (TC 1.A.1.2) subfamily. Kv4.1/KCND1 sub-subfamily. In terms of assembly, component of heteromultimeric potassium channels. Identified in potassium channel complexes containing KCND1, KCND2, KCND3, KCNIP1, KCNIP2, KCNIP3, KCNIP4, DPP6 and DPP10. As to expression, detected in carotid body chemoreceptor cells and in frontal cortex.

The protein resides in the cell membrane. The enzyme catalyses K(+)(in) = K(+)(out). A-type voltage-gated potassium channel that mediates transmembrane potassium transport in excitable membranes in the brain. Mediates A-type current I(SA) in suprachiasmatic nucleus (SCN) neurons. Exhibits a low-threshold A-type current with a hyperpolarized steady-state inactivation midpoint and the recovery process was steeply voltage-dependent, with recovery being markedly faster at more negative potentials. May regulates repetitive firing rates in the suprachiasmatic nucleus (SCN) neurons and circadian rhythms in neuronal excitability and behavior. Contributes to the regulation of the circadian rhythm of action potential firing in suprachiasmatic nucleus neurons, which regulates the circadian rhythm of locomotor activity. The regulatory subunit KCNIP1 modulates the kinetics of channel inactivation, increases the current amplitudes and accelerates recovery from inactivation, shifts activation in a depolarizing direction. The regulatory subunit DPP10 decreases the voltage sensitivity of the inactivation channel gating. The protein is A-type voltage-gated potassium channel KCND1 of Oryctolagus cuniculus (Rabbit).